Reading from the N-terminus, the 950-residue chain is Synaptotagmin-like protein 2 (950 aa).

Positions 1–57 (MIDLSFLTEEEQDAILKVLQRDAALKRAEEERVRHLPEKIKDDQQLKNMSGQWFYEA) constitute a RabBD domain. 3 disordered regions span residues 78–98 (RKKL…AKES), 116–289 (VEEP…ETLR), and 361–620 (ESDQ…SSSG). Residues 87-97 (QNKDTAMRAKE) are compositionally biased toward basic and acidic residues. 2 stretches are compositionally biased toward polar residues: residues 140–150 (IDMSQESTRTP) and 173–183 (LQQTKPEQSKT). Residues 193–205 (KEGELSESKEKSS) show a composition bias toward basic and acidic residues. The span at 219–230 (QTVSTEPENASH) shows a compositional bias: polar residues. Residues 246-264 (NDLEKDDNQSFPRQRRDSL) show a composition bias toward basic and acidic residues. The span at 434–445 (VESSSVINGQQE) shows a compositional bias: polar residues. 2 stretches are compositionally biased toward basic and acidic residues: residues 479-502 (HSFR…LERR) and 531-544 (ELVR…KADQ). Polar residues predominate over residues 557 to 567 (TVPSLPDNQFS). Positions 608 to 620 (SPSSLTNLSSSSG) are enriched in low complexity. C2 domains lie at 644–769 (VKGS…LKWY) and 784–913 (NRGE…VDWM).

In terms of assembly, monomer. Binds NRXN1. Binds RAB27A that has been activated by GTP-binding. Interacts with RAB27B. Post-translationally, isoform 1 is highly susceptible to proteolytic degradation and is stabilized by the interaction with RAB27A. Highly expressed in brain, lung, kidney, testis and in embryos after day 7. Detected at lower levels in skeletal muscle. Expressed in pancreatic alpha cells. Isoform 6 is highly expressed in brain, but not detectable in the other tissues tested. Isoform 1 is expressed abundantly in the stomach and is predominantly localized at the apical region of gastric-surface mucus cells. Isoform 11 is expressed in cytotoxic T-lymphocytes (CTL).

It is found in the melanosome membrane. It localises to the cell membrane. Functionally, isoform 11 acts as a RAB27A effector protein and plays a role in cytotoxic granule exocytosis in lymphocytes. Required for cytotoxic granule docking at the immunologic synapse. Isoform 1 may play a role in melanosome transport and vesicle trafficking. It controls melanosome distribution in the cell periphery and regulates melanocyte morphology. Isoform 1 acts as a positive mediator of mucus secretion by the surface mucus cells of the stomach. Mediates basal mucus secretion by gastric surface cells by promoting the proper granule biognesis and docking of mucus granules with the apical plasma membrane. This chain is Synaptotagmin-like protein 2 (Sytl2), found in Mus musculus (Mouse).